Consider the following 453-residue polypeptide: MTTDTIVAQATAPGRGGVGIIRVSGDLATNVAIAVLGHIPKTRYADYCDFKDEAGEVIDQGIALFFKGPNSFTGEDVLELQGHGGQIVLDMLIKRVMEVDGLRIAKPGEFSEQAFMNDKLDLTQAEAIADLIDATSEQAAKSALNSLQGEFSTQIHDLVEKVTNLRLYVEAAIDFPDEEVDFLSDGKIAASLNGIVGKLDGVQASAKQGSIIREGMKVVIAGRPNAGKSSLLNALAGKESAIVTEIAGTTRDVLREHIHLDGMPLHIIDTAGLRDTVDTVEKIGIERAWDEIKTADRVLFMVDGTTTAAIDPHEIWPDFIDRLPSNLGVTVVRNKADLTGEDLSVTQEAGHSVYRISAKTGLGVEDLKQHLKSLMGYQSNLEGGFIARRRHLEALDLASSHLMLGKEQLEVYQAGELLAEELRMCQMALSEITGKFTSDDLLGKIFSSFCIGK.

Residues Arg-22, Glu-79, and Lys-119 each contribute to the (6S)-5-formyl-5,6,7,8-tetrahydrofolate site. The TrmE-type G domain maps to Gly-215–Gly-376. Asn-225 lines the K(+) pocket. GTP is bound by residues Asn-225–Ser-230, Thr-244–Thr-250, Asp-269–Gly-272, and Asn-334–Asp-337. Ser-229 contributes to the Mg(2+) binding site. 3 residues coordinate K(+): Thr-244, Ile-246, and Thr-249. Residue Thr-250 coordinates Mg(2+). (6S)-5-formyl-5,6,7,8-tetrahydrofolate is bound at residue Lys-453.

The protein belongs to the TRAFAC class TrmE-Era-EngA-EngB-Septin-like GTPase superfamily. TrmE GTPase family. In terms of assembly, homodimer. Heterotetramer of two MnmE and two MnmG subunits. K(+) is required as a cofactor.

The protein localises to the cytoplasm. Its function is as follows. Exhibits a very high intrinsic GTPase hydrolysis rate. Involved in the addition of a carboxymethylaminomethyl (cmnm) group at the wobble position (U34) of certain tRNAs, forming tRNA-cmnm(5)s(2)U34. The polypeptide is tRNA modification GTPase MnmE (Shewanella pealeana (strain ATCC 700345 / ANG-SQ1)).